The primary structure comprises 332 residues: Fructose-1,6-bisphosphatase class 1 1 (332 aa).

Residues glutamate 92, aspartate 115, leucine 117, and aspartate 118 each coordinate Mg(2+). Substrate contacts are provided by residues 118–121, asparagine 211, tyrosine 244, 262–264, and lysine 274; these read DGSS and YLY. Glutamate 280 is a Mg(2+) binding site.

This sequence belongs to the FBPase class 1 family. In terms of assembly, homotetramer. It depends on Mg(2+) as a cofactor.

The protein localises to the cytoplasm. It catalyses the reaction beta-D-fructose 1,6-bisphosphate + H2O = beta-D-fructose 6-phosphate + phosphate. It functions in the pathway carbohydrate biosynthesis; gluconeogenesis. The sequence is that of Fructose-1,6-bisphosphatase class 1 1 from Christiangramia forsetii (strain DSM 17595 / CGMCC 1.15422 / KT0803) (Gramella forsetii).